Reading from the N-terminus, the 253-residue chain is Ciliary microtubule associated protein 1B (253 aa).

One copy of the STPGR repeat lies at 182 to 207; sequence PGPCAYQVVSPGVYKSRAPQFTILAR.

The protein belongs to the CIMAP family.

The protein resides in the cell projection. It localises to the cilium. The protein localises to the flagellum. The protein is Ciliary microtubule associated protein 1B of Homo sapiens (Human).